A 369-amino-acid chain; its full sequence is Probable dual-specificity RNA methyltransferase RlmN (369 aa).

Residue Glu108 is the Proton acceptor of the active site. In terms of domain architecture, Radical SAM core spans 114 to 357; that stretch reads YPDRATVCIS…CTVRDTRGQE (244 aa). The cysteines at positions 121 and 362 are disulfide-linked. Positions 128, 132, and 135 each coordinate [4Fe-4S] cluster. Residues 183 to 184, Ser217, 240 to 242, and Asn319 contribute to the S-adenosyl-L-methionine site; these read GE and SLH. Cys362 serves as the catalytic S-methylcysteine intermediate.

Belongs to the radical SAM superfamily. RlmN family. It depends on [4Fe-4S] cluster as a cofactor.

It is found in the cytoplasm. It carries out the reaction adenosine(2503) in 23S rRNA + 2 reduced [2Fe-2S]-[ferredoxin] + 2 S-adenosyl-L-methionine = 2-methyladenosine(2503) in 23S rRNA + 5'-deoxyadenosine + L-methionine + 2 oxidized [2Fe-2S]-[ferredoxin] + S-adenosyl-L-homocysteine. The enzyme catalyses adenosine(37) in tRNA + 2 reduced [2Fe-2S]-[ferredoxin] + 2 S-adenosyl-L-methionine = 2-methyladenosine(37) in tRNA + 5'-deoxyadenosine + L-methionine + 2 oxidized [2Fe-2S]-[ferredoxin] + S-adenosyl-L-homocysteine. Functionally, specifically methylates position 2 of adenine 2503 in 23S rRNA and position 2 of adenine 37 in tRNAs. This chain is Probable dual-specificity RNA methyltransferase RlmN, found in Saccharopolyspora erythraea (strain ATCC 11635 / DSM 40517 / JCM 4748 / NBRC 13426 / NCIMB 8594 / NRRL 2338).